The following is a 92-amino-acid chain: Small ribosomal subunit protein uS19 (92 aa).

The tract at residues 73–92 is disordered; sequence EFSPSRTYYGHAADKKAKRR.

It belongs to the universal ribosomal protein uS19 family.

In terms of biological role, protein S19 forms a complex with S13 that binds strongly to the 16S ribosomal RNA. The protein is Small ribosomal subunit protein uS19 of Maricaulis maris (strain MCS10) (Caulobacter maris).